We begin with the raw amino-acid sequence, 225 residues long: Histone H1.5 (225 aa).

The interval 1-23 (MSDVAVAETPAVKTPTKASKATK) is disordered. Ser-2 bears the N-acetylserine mark. Over residues 9 to 19 (TPAVKTPTKAS) the composition is skewed to low complexity. Positions 37 to 113 (AHPPFINMIT…GANGRFRLAV (77 aa)) constitute an H15 domain. Over residues 145-156 (KKTVAKKTGDKV) the composition is skewed to basic and acidic residues. Residues 145–225 (KKTVAKKTGD…RKAVGTAPKA (81 aa)) are disordered. Basic residues predominate over residues 157–175 (KKVKSPKRIAKPAVKKVTK). The segment covering 176–208 (KAAAPTKSAANETAPKKAAATEAAPKKAAVTKA) has biased composition (low complexity).

This sequence belongs to the histone H1/H5 family.

The protein localises to the nucleus. The protein resides in the chromosome. In terms of biological role, histones H1 are necessary for the condensation of nucleosome chains into higher-order structures. The chain is Histone H1.5 (hil-5) from Caenorhabditis elegans.